Here is an 85-residue protein sequence, read N- to C-terminus: RKRLFYRYYSHPGNYMYLGHYGRYYNMLHNCNAMLLAHQMQAMRRYQHRMRVKQMYRRIKMKQMYRHMKWMGMYRQAKAARLRCI.

The protein belongs to the turripeptide family. In terms of tissue distribution, expressed by the venom duct.

It localises to the secreted. Its function is as follows. Is lethal to drosophila larvae. The chain is Turripeptide PaIAa from Polystira albida (White giant-turris).